Consider the following 142-residue polypeptide: Large ribosomal subunit protein uL22c (142 aa).

The protein belongs to the universal ribosomal protein uL22 family. Part of the 50S ribosomal subunit.

It is found in the plastid. The protein resides in the chloroplast. Its function is as follows. This protein binds specifically to 23S rRNA. The globular domain of the protein is located near the polypeptide exit tunnel on the outside of the subunit, while an extended beta-hairpin is found that lines the wall of the exit tunnel in the center of the 70S ribosome. The polypeptide is Large ribosomal subunit protein uL22c (rpl22) (Carica papaya (Papaya)).